A 367-amino-acid chain; its full sequence is BTB/POZ domain-containing protein Tiwaz (367 aa).

Disordered stretches follow at residues 16-46 (LTVD…PRDL) and 62-87 (SSPT…SSVT). The span at 28–45 (CDMDRERERDVKALEPRD) shows a compositional bias: basic and acidic residues. A BTB domain is found at 135-205 (APVHIDVGGT…MRNSRLLIAE (71 aa)). The interval 240–261 (GNYLVAPPTPPARHIKTSPRTS) is disordered.

Functionally, functions with the transcription factor TfAP-2 to regulate octopamine neuronal signaling pathways that control behaviors such as male aggression, male mating, and the initiation of feeding. Required for TfAP-2 transcriptional activity in octopaminergic neurons. Functions with TfAP-2 to regulate expression of genes which are involved in promoting octopamine production and secretion from octopaminergic neurons, such as Tbh and Vmat. Octopamine then modulates feeding and male aggression by regulating the expression of the satiation hormone Dsk in insulin-producing cells (IPCs). Functions with octopamine and Dsk as part of a negative feedback loop to prevent overeating; acts with TfAP-2 to regulate octopamine signaling pathways that initiate feeding, then octopamine activates expression of Dsk which inhibits consummatory behavior. May also be involved in negatively regulating nociception in larvae to prevent spontaneous pain and hyperalgesia. The chain is BTB/POZ domain-containing protein Tiwaz from Drosophila melanogaster (Fruit fly).